A 120-amino-acid chain; its full sequence is U13-lycotoxin-Ls1f (120 aa).

Positions Met-1 to Ser-19 are cleaved as a signal peptide. A propeptide spanning residues Glu-20–Arg-54 is cleaved from the precursor. Intrachain disulfides connect Cys-56/Cys-70, Cys-63/Cys-76, Cys-69/Cys-87, and Cys-78/Cys-85. Residues Cys-56–Cys-95 form the Agouti domain.

This sequence belongs to the neurotoxin 05 (agouti) family. Contains 6 disulfide bonds. Expressed by the venom gland.

The protein localises to the secreted. In Lycosa singoriensis (Wolf spider), this protein is U13-lycotoxin-Ls1f.